Consider the following 207-residue polypeptide: Guanylate kinase (207 aa).

In terms of domain architecture, Guanylate kinase-like spans Gly4–Arg184. Ala11–Ser18 serves as a coordination point for ATP.

The protein belongs to the guanylate kinase family.

It is found in the cytoplasm. It catalyses the reaction GMP + ATP = GDP + ADP. In terms of biological role, essential for recycling GMP and indirectly, cGMP. This chain is Guanylate kinase, found in Aliivibrio fischeri (strain ATCC 700601 / ES114) (Vibrio fischeri).